We begin with the raw amino-acid sequence, 352 residues long: MIQTEEMNQLKADALADISQAADEKALQDVKVKYLGKKGSVSGLMKQMKDLSNEEKPKFGQAVNEVRQAIESAIADRKSVLEQDRLNKQLEEETIDVTLPSRSIKLGATHPLTRTIQEIEDLFLGLGFEIVNGYEVEQDYYNFEALNLPKSHPARDMQDTFYITEETLLRTHTSPVQARTLEKRNGQGPVKIICPGKVYRRDSDDATHSHQFTQIEGLVVAENIKMSDLKGTLELVAKKLFGEEREIRLRPSYFPFTEPSVEVDVSCFKCGGKGCNVCKQTGWIEILGAGMVHPNVLEMAGFDSSKYTGFAFGMGPDRIAMLKYGIEDIRYFYTNDVRFLDQFKAVEDRGEA.

Position 258 (E258) interacts with Mg(2+).

The protein belongs to the class-II aminoacyl-tRNA synthetase family. Phe-tRNA synthetase alpha subunit type 1 subfamily. In terms of assembly, tetramer of two alpha and two beta subunits. Requires Mg(2+) as cofactor.

It is found in the cytoplasm. The catalysed reaction is tRNA(Phe) + L-phenylalanine + ATP = L-phenylalanyl-tRNA(Phe) + AMP + diphosphate + H(+). The chain is Phenylalanine--tRNA ligase alpha subunit from Staphylococcus carnosus (strain TM300).